A 121-amino-acid chain; its full sequence is Probable intron-encoded DNA endonuclease aI1 (121 aa).

It belongs to the LAGLIDADG endonuclease family.

It localises to the mitochondrion. Its function is as follows. Mitochondrial DNA endonuclease involved in intron homing. This is Probable intron-encoded DNA endonuclease aI1 (aI1) from Mycosarcoma maydis (Corn smut fungus).